The chain runs to 682 residues: Putative protein RhsE (682 aa).

Positions 348–360 (ENGEREKAQRRSL) are enriched in basic and acidic residues. The interval 348–372 (ENGEREKAQRRSLAETLQQEGSENG) is disordered.

This sequence belongs to the RHS family.

In terms of biological role, rhs elements have a nonessential function. They may play an important role in the natural ecology of the cell. This chain is Putative protein RhsE (rhsE), found in Escherichia coli (strain K12).